A 241-amino-acid chain; its full sequence is Aspartate/glutamate leucyltransferase (241 aa).

Belongs to the R-transferase family. Bpt subfamily.

Its subcellular location is the cytoplasm. The enzyme catalyses N-terminal L-glutamyl-[protein] + L-leucyl-tRNA(Leu) = N-terminal L-leucyl-L-glutamyl-[protein] + tRNA(Leu) + H(+). It carries out the reaction N-terminal L-aspartyl-[protein] + L-leucyl-tRNA(Leu) = N-terminal L-leucyl-L-aspartyl-[protein] + tRNA(Leu) + H(+). In terms of biological role, functions in the N-end rule pathway of protein degradation where it conjugates Leu from its aminoacyl-tRNA to the N-termini of proteins containing an N-terminal aspartate or glutamate. The sequence is that of Aspartate/glutamate leucyltransferase from Helicobacter hepaticus (strain ATCC 51449 / 3B1).